A 1598-amino-acid polypeptide reads, in one-letter code: MEAERETELSQLLLTELLSYQFANPVKWIETQDVLLKEKEINHMIEIGPSSTLTNMAKRTISKKYSEHDAALREPRLLQSFDEHAAEIYCETMQIRTQPHKSSAPQEPVPKAAPKAAPPVPVATAPLPEPGRQVSTMPINVEDVPIQSRDVIVATVAQKLRKHFLDIDCSKSIAQLCGGRSTMENELVGDLSLIFDPLPDRAEEMGISELSQIVSGSTSTTKLLTAHGKLTASIFTHKMPGGFTITDARKHLEVQWRLGVGRQNAILLRMATEVLPSRLKTREEATMLLDKIAEAYADEQGLKLQPMTEVPMSAPTTSSETKVISGCSDVELYTSNDISLPESEALVNAQKMLNIVKTENDTLQEKMDLLTTELGDDFIQGILPAWSPAKIRKYESCWNWALQDLLLLLNSILRGETSLDNSVTRSTCDMIVRRSNDRLIDVMRYMLSSNKLAGDELLVSMAKSVLAMLIEDSQNWLSCAQTSRFFGHELHNPIDAYAQGTPGSDSVEVKVKTRSQGTWKYDTSLIDLYKSSLACVREDGLRLKGKTVLLTGAGPSSIGRELLQHLLVSGALVLVATSRFSPTACRELQNLYMKWGSSGSQLVVCPFNQGSRGDCESLVQYIFSAKAKGGLGWDLDFVIPFAAVSEEGQIDELDSKSEKAHRIMLTNVLRLLGSIKQHKQAGPRNTSPVKVLLPLSPNHGVFGRDGLYAESKAGLEMLLNKWYSEDWTSYLAICGVTIGWVRGTGLMAVNDAVAAEVEVRTGVKTFSQFEMAQRLAALLVNPFAHEVEIQPVKVDISGGMADTTDLRSILSDIRREIKQDSTSTPTHQHLPSHHHVDEPEIGKPLSSVSPMANLKLNFPQLPDYEDDISPLNTLSGMVDLDRTVVITGISEVGPWGNSRTRWEMEAFGEFSLEGCIEMAWIMGLITHYNGKLGDDMGGEQYTGWVDAKTKAPVADVDVKARYEEQIIEHSGIRLVEPELDNGYDPRKKQLLHEIVLTRDLAPFAAPPELAKQFMQEHGEKVDAIPGSTENEDWTVRLRKGAVILVPKALRFDRSAAGQIPQGWDARRYGVPDWAVDQIGRETLFALVATAESLLSSGIVDPYELYQYMHVSEVGNCVGSGLGGQQALKKAFRYRYHDKPVQSDVLQEVFSNTAAAWINMLLLSSSGPIRTPVGACATAVESLELGYELITAGKAKIALVGGHDDMTEEVAYEFAKMRATVNTDEEEARGRMYSEMSRPMTTTRDGFVESQGSGIQVLASATMAIKMGLPIYGIVSWAGTASDKTGRSVPSPGKGTLTNARETHGADKNLLLDIHFRKDRITRHQQQIQADLEQDLKSLEQRFAMSRSITKSEVDKMSLFLHKEAIERNKQVLKSLGHTFWTSHTDISPIRGALSAWGLSIDDLDFVSLHGTSTVLNDKNETSVIQSQLSHLGRTRGNPAYCITQKYLTGHSKGAAGAWMINGALQALNTGLIPGNRNADDVAPELEGNDFLFFPHHSVQTNGLRAFSITSFGFGQKGAQAIIVHPRYLYAALSDAEEFHQYRRRLNVRQRRATKFFQRGLATETLFIAKEEPPYTEKQESRVLLNPEARMEGQHYKDV.

The disordered stretch occupies residues 96 to 134 (RTQPHKSSAPQEPVPKAAPKAAPPVPVATAPLPEPGRQV). The span at 104–115 (APQEPVPKAAPK) shows a compositional bias: low complexity. The 79-residue stretch at 143–221 (DVPIQSRDVI…QIVSGSTSTT (79 aa)) folds into the Carrier domain. Ser181 carries the post-translational modification O-(pantetheine 4'-phosphoryl)serine. Residues 543-784 (LKGKTVLLTG…LAALLVNPFA (242 aa)) form a ketoreductase (KR) domain region. Positions 818-844 (KQDSTSTPTHQHLPSHHHVDEPEIGKP) are disordered. A compositionally biased stretch (polar residues) spans 820 to 829 (DSTSTPTHQH). The region spanning 992-1524 (HEIVLTRDLA…QKGAQAIIVH (533 aa)) is the Ketosynthase family 3 (KS3) domain. Cys1175 functions as the For beta-ketoacyl synthase activity in the catalytic mechanism. A disordered region spans residues 1280-1301 (ASDKTGRSVPSPGKGTLTNARE). Catalysis depends on for beta-ketoacyl synthase activity residues His1409 and His1450.

It belongs to the thiolase-like superfamily. Fungal fatty acid synthetase subunit alpha family. In terms of assembly, fatty acid synthase is composed of alpha and beta subunits.

It carries out the reaction acetyl-CoA + n malonyl-CoA + 2n NADPH + 4n H(+) = a long-chain-acyl-CoA + n CoA + n CO2 + 2n NADP(+).. It catalyses the reaction a fatty acyl-[ACP] + malonyl-[ACP] + H(+) = a 3-oxoacyl-[ACP] + holo-[ACP] + CO2. The catalysed reaction is a (3R)-hydroxyacyl-[ACP] + NADP(+) = a 3-oxoacyl-[ACP] + NADPH + H(+). It functions in the pathway mycotoxin biosynthesis. Functionally, fatty acid synthase subunit alpha; part of the gene cluster that mediates the biosynthesis of gramillins A and B, bicyclic lipopeptides that induce cell death in maize leaves but not in wheat leaves. The nonribosomal peptide synthetase GRA1 incorporates respectively a glutamic adic (Glu), a leucine (Leu), a serine (Ser), a hydroxyglutamine (HOGln), a 2-amino decanoic acid, and 2 cysteins (CysB and CysA). The biosynthesis of 2-amino decanoic acid incorporated in gramillins could be initiated by a fatty acid synthase composed of the alpha and beta subunits FGSG_00036 and FGSG_11656. The cytochrome P450 monooxygenase FGSG_15680 could hydroxylate the fatty acid chain. Subsequent oxidation to the ketone by the oxidoreductase FGSG_00048 and transamination by aminotransferase FGSG_00049 could form 2-amino-decanoic acid. On the other hand, FGSG_15680 could also be responsible for the HO-modified glutamine at the gamma-position. Whether hydroxylation occurs on the fully assembled product or on the Gln residue prior to assembly into the gramillins requires further proof. The thioredoxin FGSG_00043 could also be required for the disulfide-bond formation between CysA and CysB. The specific involvement of the remaining proteins from the cluster is more difficult to discern, but could have broader regulatory (FGSG_00040 and FGSG_11657) or enzymatic functions (FGSG_00044 and FGSG_00045). The final C-domain of GRA1 does not possess the expected sequence of a termination CT domain, often implicated in macrocyclization and release of a cyclopeptidein fungal NRPs; and the thioesterase FGSG_00047 may act in concert with the terminal C-domain of GRA1 to catalyze the formation of the macrocyclic anhydride and release of the products. The chain is Fatty acid synthase subunit alpha from Gibberella zeae (strain ATCC MYA-4620 / CBS 123657 / FGSC 9075 / NRRL 31084 / PH-1) (Wheat head blight fungus).